A 100-amino-acid chain; its full sequence is NADH-quinone oxidoreductase subunit K (100 aa).

Helical transmembrane passes span 4–24 (LSWYLLLSATLFSIGLIGFVI), 29–49 (IVMLMCLEIMFNAVNIAFASF), and 60–80 (IFVLFSIAVAACEAVIGLAIV).

It belongs to the complex I subunit 4L family. As to quaternary structure, NDH-1 is composed of 14 different subunits. Subunits NuoA, H, J, K, L, M, N constitute the membrane sector of the complex.

Its subcellular location is the cell inner membrane. The enzyme catalyses a quinone + NADH + 5 H(+)(in) = a quinol + NAD(+) + 4 H(+)(out). Functionally, NDH-1 shuttles electrons from NADH, via FMN and iron-sulfur (Fe-S) centers, to quinones in the respiratory chain. The immediate electron acceptor for the enzyme in this species is believed to be ubiquinone. Couples the redox reaction to proton translocation (for every two electrons transferred, four hydrogen ions are translocated across the cytoplasmic membrane), and thus conserves the redox energy in a proton gradient. This is NADH-quinone oxidoreductase subunit K from Thermodesulfovibrio yellowstonii (strain ATCC 51303 / DSM 11347 / YP87).